Here is a 146-residue protein sequence, read N- to C-terminus: Catabolic 3-dehydroquinase (146 aa).

Catalysis depends on Tyr24, which acts as the Proton acceptor. The substrate site is built by Asn78, His84, and Asp91. His104 serves as the catalytic Proton donor. Residues 105-106 (IT) and Arg115 contribute to the substrate site.

It belongs to the type-II 3-dehydroquinase family. As to quaternary structure, homododecamer. Adopts a ring-like structure, composed of an arrangement of two hexameric rings stacked on top of one another.

The enzyme catalyses 3-dehydroquinate = 3-dehydroshikimate + H2O. It participates in aromatic compound metabolism; 3,4-dihydroxybenzoate biosynthesis; 3,4-dihydroxybenzoate from 3-dehydroquinate: step 1/2. Functionally, is involved in the catabolism of quinate. Allows the utilization of quinate as carbon source via the beta-ketoadipate pathway. This is Catabolic 3-dehydroquinase from Scheffersomyces stipitis (strain ATCC 58785 / CBS 6054 / NBRC 10063 / NRRL Y-11545) (Yeast).